The following is a 2276-amino-acid chain: Poly [ADP-ribose] polymerase tankyrase (2276 aa).

2 stretches are compositionally biased toward basic residues: residues 1 to 15 (MARRVNKKKSPVKAA) and 87 to 98 (KAVKAPKVKAPS). Disordered stretches follow at residues 1–20 (MARRVNKKKSPVKAARKIDG) and 79–103 (SSKTGQKVKAVKAPKVKAPSKKGND). ANK repeat units follow at residues 345-374 (KNITPLHTAAISNSTHMLEAMRAVYPTINI), 378-407 (DNWYTMHYAACAPGTAPMEFLLKNGGSVTM), 411-440 (QTETPLHVAARAGRAVNCTFLMKEMLDLEK), 461-490 (SGNSALHLAVLRNNLDVVDALLAEPTIVVD), 498-527 (NRLTPLMMACGKGYLEMAKKLVEKGALVEG), 531-560 (KKRTPLIHAMLNGQIHTAAFLLAKGASLTL), 564-593 (SGNTAAHYAAAYGFLDCLKLLASIDDNILS), 598-627 (WQLYPLSVAYLKGHYGIVTWLLEGPHKDKA), 675-725 (SGQT…KVDV), 729-758 (EDNTPLHYALTNGNLMLFNLMLDKVANKRN), 970-999 (KDDVLIVQAIMFDKPNVVELILDTASEMHL), 1171-1200 (NGNTILHLAAIKNSTICLMTLIRKKCHVDL), 1204-1233 (DGNTPLALAVHHGRQSSALTLIQANADVTE), 1472-1501 (GLIPPISFAVLQENPNMIRALRNAGASLKT), and 1505-1535 (YGRTPLMYAIMTNNRSVVDAIVGDGKLAVVL). Residues 1570 to 1649 (VPARVESDEE…STGPKRKKLV (80 aa)) form a disordered region. 2 stretches are compositionally biased toward acidic residues: residues 1576-1590 (SDEEEEDNSGSESGE) and 1612-1622 (SDDEDDDDDDS). The stretch at 1662–1706 (KENNPLHYFIEPLAWENVELLGDLAAANKTAIVQCLIDKRSPNPI) is one ANK 16 repeat. Residues 1788 to 1889 (GLVSFCDETQ…ANFRDMPKKY (102 aa)) enclose the WGR domain. One can recognise a PARP alpha-helical domain in the interval 1910–2045 (KNTEKDPIRR…EIETATRLLC (136 aa)). The region spanning 2047–2276 (AEFRQDLDRV…VLPKYIVMYK (230 aa)) is the PARP catalytic domain.

Expressed throughout the head and tail, in germ cells and somatic cells.

The protein resides in the nucleus. It localises to the chromosome. It carries out the reaction NAD(+) + (ADP-D-ribosyl)n-acceptor = nicotinamide + (ADP-D-ribosyl)n+1-acceptor + H(+).. It catalyses the reaction L-aspartyl-[protein] + NAD(+) = 4-O-(ADP-D-ribosyl)-L-aspartyl-[protein] + nicotinamide. The enzyme catalyses L-glutamyl-[protein] + NAD(+) = 5-O-(ADP-D-ribosyl)-L-glutamyl-[protein] + nicotinamide. Functionally, poly[ADP-ribose] polymerases modify various nuclear proteins by poly(ADP-ribosyl)ation, a post-translational modification synthesized after DNA damage that appears as an obligatory step in a detection/signaling pathway leading to the reparation of DNA strand breaks and programmed cell death. The sequence is that of Poly [ADP-ribose] polymerase tankyrase from Caenorhabditis elegans.